The primary structure comprises 372 residues: PqqA peptide cyclase (372 aa).

A Radical SAM core domain is found at 4–220 (APPPLSVLLE…ETARRQLGDR (217 aa)). Residues Cys-18, Cys-22, and Cys-25 each contribute to the [4Fe-4S] cluster site. The disordered stretch occupies residues 342–372 (ATAEQESASPAPAFIYRRPERPAAATADPLE).

Belongs to the radical SAM superfamily. PqqE family. As to quaternary structure, interacts with PqqD. The interaction is necessary for activity of PqqE. [4Fe-4S] cluster serves as cofactor.

The catalysed reaction is [PQQ precursor protein] + S-adenosyl-L-methionine = E-Y cross-linked-[PQQ precursor protein] + 5'-deoxyadenosine + L-methionine + H(+). It functions in the pathway cofactor biosynthesis; pyrroloquinoline quinone biosynthesis. Functionally, catalyzes the cross-linking of a glutamate residue and a tyrosine residue in the PqqA protein as part of the biosynthesis of pyrroloquinoline quinone (PQQ). The sequence is that of PqqA peptide cyclase from Xanthomonas euvesicatoria pv. vesicatoria (strain 85-10) (Xanthomonas campestris pv. vesicatoria).